Here is a 268-residue protein sequence, read N- to C-terminus: Proenkephalin-A (268 aa).

A signal peptide spans 1–24; it reads MARFLRLCTWLLVLGSCLLATVQA. Cystine bridges form between Cys-26–Cys-48, Cys-30–Cys-52, and Cys-33–Cys-65. The segment at 162-185 is disordered; the sequence is GTGDNRAREGRHQESTDNDDNMSK. Residues 166–176 show a composition bias toward basic and acidic residues; the sequence is NRAREGRHQES. 2 propeptides span residues 197–208 and 218–228; these read SPQVEDEAKELQ and VGRPEWWMDYQ. A Phosphoserine modification is found at Ser-252.

Belongs to the opioid neuropeptide precursor family. Post-translationally, proenkephalin-A is cleaved by CTSL to generate Met-enkephalin. Processed and degraded by ACE. In terms of processing, probably cleaved by ACE. Post-translationally, processed by ACE to generate Met-enkephalin in the nucleus accumbens of the brain. The N-terminal domain contains 6 conserved cysteines thought to be involved in disulfide bonding and/or processing.

The protein localises to the cytoplasmic vesicle. It localises to the secretory vesicle. Its subcellular location is the chromaffin granule lumen. The protein resides in the secreted. Functionally, neuropeptide that competes with and mimic the effects of opiate drugs. They play a role in a number of physiologic functions, including pain perception and responses to stress. Its function is as follows. Met-enkephalin-Arg-Phe neuropeptide acts as a strong ligand of Mu-type opioid receptor OPRM1. Met-enkephalin-Arg-Phe-binding to OPRM1 in the nucleus accumbens of the brain increases activation of OPRM1, leading to long-term synaptic depression of glutamate release. Increases glutamate release in the striatum and decreases GABA concentration in the striatum. In terms of biological role, increases glutamate release in the striatum. The chain is Proenkephalin-A (PENK) from Mesocricetus auratus (Golden hamster).